Here is a 54-residue protein sequence, read N- to C-terminus: Photoreceptor disk component PRCD (54 aa).

Cys2 is lipidated: S-palmitoyl cysteine. The disordered stretch occupies residues 25–54 (PEPSDVDGAARGSSLDADPQSSGREKEPLK).

Belongs to the PRCD family. Interacts with RHO/rhodopsin; the interaction promotes PRCD stability. Palmitoylated at Cys-2. Palmitoylation is essential for protein stability and trafficking to the photoreceptor outer segment, but does not appear to be essential for membrane localization. Probably palmitoylated by ZDHHC3. Post-translationally, phosphorylated.

The protein resides in the cell projection. The protein localises to the cilium. It localises to the photoreceptor outer segment. Its subcellular location is the membrane. It is found in the endoplasmic reticulum. The protein resides in the golgi apparatus. In terms of biological role, involved in vision. This chain is Photoreceptor disk component PRCD, found in Homo sapiens (Human).